Reading from the N-terminus, the 350-residue chain is GTPase Obg (350 aa).

Residues 1 to 159 form the Obg domain; the sequence is MKLVDEAEIE…RTLKLELKLL (159 aa). Residues 126-147 form a disordered region; sequence GNMHFKSSTNRSPRQALPGEPG. Residues 160–337 form the OBG-type G domain; it reads ADVGLLGFPN…IMSRIMAFFD (178 aa). GTP-binding positions include 166–173, 191–195, 213–216, 287–290, and 318–320; these read GFPNAGKS, FTTLY, DIPG, NKAD, and SAL. Residues Ser-173 and Thr-193 each coordinate Mg(2+).

This sequence belongs to the TRAFAC class OBG-HflX-like GTPase superfamily. OBG GTPase family. Monomer. The cofactor is Mg(2+).

The protein localises to the cytoplasm. Its function is as follows. An essential GTPase which binds GTP, GDP and possibly (p)ppGpp with moderate affinity, with high nucleotide exchange rates and a fairly low GTP hydrolysis rate. Plays a role in control of the cell cycle, stress response, ribosome biogenesis and in those bacteria that undergo differentiation, in morphogenesis control. In Stenotrophomonas maltophilia (strain K279a), this protein is GTPase Obg.